Consider the following 166-residue polypeptide: MELAKGNAEIQVGIADYKVAASPNRLITLGLGSCVGVVLYDPVKKVGGLLHIMLPDSTQFNNVTKPAKFADTGIPLMIDEIKRLGGIPSRLTAKLAGGAQMFSGLDEKFVLNIGQRNSKMVKEILSRMGIRILAEELGGNRGRTMIFDIASGQVTIRTIGSPLKVI.

This sequence belongs to the CheD family.

The catalysed reaction is L-glutaminyl-[protein] + H2O = L-glutamyl-[protein] + NH4(+). Functionally, probably deamidates glutamine residues to glutamate on methyl-accepting chemotaxis receptors (MCPs), playing an important role in chemotaxis. This Desulforamulus reducens (strain ATCC BAA-1160 / DSM 100696 / MI-1) (Desulfotomaculum reducens) protein is Probable chemoreceptor glutamine deamidase CheD.